The sequence spans 178 residues: FXYD domain-containing ion transport regulator 5 (178 aa).

The first 21 residues, 1–21, serve as a signal peptide directing secretion; it reads MSPSGRLCLLTIVGLILPTRG. Residues 22–145 are Extracellular-facing; it reads QTLKDTTSSS…FYDEHTLRKR (124 aa). Positions 23 to 131 are disordered; sequence TLKDTTSSSS…QTLKPSGFHE (109 aa). Low complexity-rich tracts occupy residues 26–36 and 68–77; these read DTTSSSSADST and TPQPQTQTQQ. The span at 103–125 shows a compositional bias: polar residues; the sequence is DTTTLSERPSPSTDVQTDPQTLK. A helical membrane pass occupies residues 146-164; it reads GLLVAAVLFITGIIILTSG. The Cytoplasmic portion of the chain corresponds to 165 to 178; the sequence is KCRQLSRLCRNRCR.

The protein belongs to the FXYD family. Regulatory subunit of the sodium/potassium-transporting ATPase which is composed of a catalytic alpha subunit, a non-catalytic beta subunit and an additional regulatory subunit. The regulatory subunit, a member of the FXYD protein family, modulates the enzymatic activity in a tissue- and isoform-specific way by changing affinities of the Na+/K+-ATPase toward Na(+), K(+) or ATP. In terms of processing, glycosylated.

It localises to the cell membrane. It is found in the basolateral cell membrane. In terms of biological role, associates with and regulates the activity of the sodium/potassium-transporting ATPase (NKA) which catalyzes the hydrolysis of ATP coupled with the exchange of Na(+) and K(+) ions across the plasma membrane. May increase NKA activity by increasing the apparent affinity for Na(+). Involved in down-regulation of E-cadherin which results in reduced cell adhesion. Promotes metastasis. The polypeptide is FXYD domain-containing ion transport regulator 5 (FXYD5) (Homo sapiens (Human)).